Reading from the N-terminus, the 360-residue chain is 3-dehydroquinate synthase (360 aa).

NAD(+) is bound by residues 71–76 (DGEQYK), 105–109 (GVVGD), 129–130 (TT), K142, K151, and 169–172 (TLNT). The Zn(2+) site is built by E184, H248, and H265.

This sequence belongs to the sugar phosphate cyclases superfamily. Dehydroquinate synthase family. It depends on Co(2+) as a cofactor. Zn(2+) serves as cofactor. Requires NAD(+) as cofactor.

It is found in the cytoplasm. It catalyses the reaction 7-phospho-2-dehydro-3-deoxy-D-arabino-heptonate = 3-dehydroquinate + phosphate. The protein operates within metabolic intermediate biosynthesis; chorismate biosynthesis; chorismate from D-erythrose 4-phosphate and phosphoenolpyruvate: step 2/7. Its function is as follows. Catalyzes the conversion of 3-deoxy-D-arabino-heptulosonate 7-phosphate (DAHP) to dehydroquinate (DHQ). This Coxiella burnetii (strain RSA 331 / Henzerling II) protein is 3-dehydroquinate synthase.